A 301-amino-acid polypeptide reads, in one-letter code: 2-dehydropantoate 2-reductase (301 aa).

NADP(+)-binding positions include 7 to 12 (GAGAIG), lysine 74, asparagine 99, and alanine 123. Residue lysine 179 is the Proton donor of the active site. Substrate is bound by residues lysine 179, asparagine 183, asparagine 187, asparagine 197, and 246–249 (NYNS). Glutamate 261 is an NADP(+) binding site.

The protein belongs to the ketopantoate reductase family.

Its subcellular location is the cytoplasm. The catalysed reaction is (R)-pantoate + NAD(+) = 2-dehydropantoate + NADH + H(+). The enzyme catalyses (R)-pantoate + NADP(+) = 2-dehydropantoate + NADPH + H(+). It participates in cofactor biosynthesis; coenzyme A biosynthesis. Its function is as follows. Catalyzes the NAD(P)H-dependent reduction of ketopantoate into pantoic acid. This is 2-dehydropantoate 2-reductase from Pyrococcus horikoshii (strain ATCC 700860 / DSM 12428 / JCM 9974 / NBRC 100139 / OT-3).